The sequence spans 446 residues: tRNA-2-methylthio-N(6)-dimethylallyladenosine synthase (446 aa).

The 118-residue stretch at 2–119 (KKIYIKTFGC…LPELIAQRRE (118 aa)) folds into the MTTase N-terminal domain. [4Fe-4S] cluster is bound by residues C11, C48, C82, C156, C160, and C163. A Radical SAM core domain is found at 142-376 (RVEGGAAFVS…RIEAQAQGVN (235 aa)). In terms of domain architecture, TRAM spans 377-440 (RSMVGSVQRV…PHSLRGEAVT (64 aa)).

The protein belongs to the methylthiotransferase family. MiaB subfamily. In terms of assembly, monomer. [4Fe-4S] cluster serves as cofactor.

The protein localises to the cytoplasm. It carries out the reaction N(6)-dimethylallyladenosine(37) in tRNA + (sulfur carrier)-SH + AH2 + 2 S-adenosyl-L-methionine = 2-methylsulfanyl-N(6)-dimethylallyladenosine(37) in tRNA + (sulfur carrier)-H + 5'-deoxyadenosine + L-methionine + A + S-adenosyl-L-homocysteine + 2 H(+). Functionally, catalyzes the methylthiolation of N6-(dimethylallyl)adenosine (i(6)A), leading to the formation of 2-methylthio-N6-(dimethylallyl)adenosine (ms(2)i(6)A) at position 37 in tRNAs that read codons beginning with uridine. In Thiobacillus denitrificans (strain ATCC 25259 / T1), this protein is tRNA-2-methylthio-N(6)-dimethylallyladenosine synthase.